A 149-amino-acid polypeptide reads, in one-letter code: MKVILKQDVSNLGKRFDVVDVKDGYAIHFLFPKKLAAPLTKKSLQDRDLFLKKQQEHYEINKALSHKLKEVIEQTELHFSLKEHNGRPYGSIITKQIINQAHTKGMALQKFMFKDNVRLGFGDHEITLHIFEDTTAVLKVKVTPDNGVK.

This sequence belongs to the bacterial ribosomal protein bL9 family.

Its function is as follows. Binds to the 23S rRNA. The chain is Large ribosomal subunit protein bL9 from Mycoplasma pneumoniae (strain ATCC 29342 / M129 / Subtype 1) (Mycoplasmoides pneumoniae).